Consider the following 276-residue polypeptide: S-adenosylmethionine decarboxylase proenzyme (276 aa).

The active-site Schiff-base intermediate with substrate; via pyruvic acid is Ser124. Pyruvic acid (Ser); by autocatalysis is present on Ser124. His129 acts as the Proton acceptor; for processing activity in catalysis. The active-site Proton donor; for catalytic activity is Cys152.

The protein belongs to the prokaryotic AdoMetDC family. Type 2 subfamily. As to quaternary structure, heterooctamer of four alpha and four beta chains arranged as a tetramer of alpha/beta heterodimers. The cofactor is pyruvate. Is synthesized initially as an inactive proenzyme. Formation of the active enzyme involves a self-maturation process in which the active site pyruvoyl group is generated from an internal serine residue via an autocatalytic post-translational modification. Two non-identical subunits are generated from the proenzyme in this reaction, and the pyruvate is formed at the N-terminus of the alpha chain, which is derived from the carboxyl end of the proenzyme. The post-translation cleavage follows an unusual pathway, termed non-hydrolytic serinolysis, in which the side chain hydroxyl group of the serine supplies its oxygen atom to form the C-terminus of the beta chain, while the remainder of the serine residue undergoes an oxidative deamination to produce ammonia and the pyruvoyl group blocking the N-terminus of the alpha chain.

It carries out the reaction S-adenosyl-L-methionine + H(+) = S-adenosyl 3-(methylsulfanyl)propylamine + CO2. Its pathway is amine and polyamine biosynthesis; S-adenosylmethioninamine biosynthesis; S-adenosylmethioninamine from S-adenosyl-L-methionine: step 1/1. In terms of biological role, catalyzes the decarboxylation of S-adenosylmethionine to S-adenosylmethioninamine (dcAdoMet), the propylamine donor required for the synthesis of the polyamines spermine and spermidine from the diamine putrescine. The chain is S-adenosylmethionine decarboxylase proenzyme from Desulfitobacterium hafniense (strain Y51).